The sequence spans 168 residues: UPF0304 protein MJECS11 (168 aa).

Belongs to the UPF0304 family.

This Methanocaldococcus jannaschii (strain ATCC 43067 / DSM 2661 / JAL-1 / JCM 10045 / NBRC 100440) (Methanococcus jannaschii) protein is UPF0304 protein MJECS11.